Consider the following 336-residue polypeptide: Small ribosomal subunit protein uS2 (336 aa).

It belongs to the universal ribosomal protein uS2 family.

The sequence is that of Small ribosomal subunit protein uS2 from Beijerinckia indica subsp. indica (strain ATCC 9039 / DSM 1715 / NCIMB 8712).